A 906-amino-acid chain; its full sequence is ATP-dependent DNA helicase DDX11 (906 aa).

A Helicase ATP-binding domain is found at glycine 9–leucine 442. Serine 44–serine 51 provides a ligand contact to ATP. A disordered region spans residues alanine 78 to aspartate 111. The span at serine 85–serine 96 shows a compositional bias: low complexity. Phosphoserine is present on serine 260. [4Fe-4S] cluster is bound by residues cysteine 265 and cysteine 283. The span at valine 284–proline 301 shows a compositional bias: basic and acidic residues. The segment at valine 284–threonine 310 is disordered. [4Fe-4S] cluster contacts are provided by cysteine 312 and cysteine 347. Positions aspartate 390–histidine 393 match the DEAH box motif.

Belongs to the DEAD box helicase family. DEAH subfamily. DDX11/CHL1 sub-subfamily. Associates with the CTF18-RFC complex. Associates with a cohesin complex composed of RAD21, SMC1 proteins and SMC3. Interacts with CHTF18. Interacts with DSCC1. Interacts with FEN1; this interaction is direct and increases flap endonuclease activity of FEN1. Interacts with PCNA. Interacts with POLR1A and UBTF. Interacts with RAD21, SMC1 proteins and SMC3. Interacts with RFC2. Interacts with TIMELESS; this interaction increases recruitment of both proteins onto chromatin in response to replication stress induction by hydroxyurea. Requires [4Fe-4S] cluster as cofactor.

It localises to the nucleus. Its subcellular location is the nucleolus. The protein localises to the cytoplasm. The protein resides in the cytoskeleton. It is found in the spindle pole. It localises to the midbody. Its subcellular location is the microtubule organizing center. The protein localises to the centrosome. It carries out the reaction Couples ATP hydrolysis with the unwinding of duplex DNA at the replication fork by translocating in the 5'-3' direction. This creates two antiparallel DNA single strands (ssDNA). The leading ssDNA polymer is the template for DNA polymerase III holoenzyme which synthesizes a continuous strand.. The enzyme catalyses ATP + H2O = ADP + phosphate + H(+). Functionally, DNA-dependent ATPase and ATP-dependent DNA helicase that participates in various functions in genomic stability, including DNA replication, DNA repair and heterochromatin organization as well as in ribosomal RNA synthesis. Its double-stranded DNA helicase activity requires either a minimal 5'-single-stranded tail length of approximately 15 nt (flap substrates) or 10 nt length single-stranded gapped DNA substrates of a partial duplex DNA structure for helicase loading and translocation along DNA in a 5' to 3' direction. The helicase activity is capable of displacing duplex regions up to 100 bp, which can be extended up to 500 bp by the replication protein A (RPA) or the cohesion CTF18-replication factor C (Ctf18-RFC) complex activities. Also shows ATPase- and helicase activities on substrates that mimic key DNA intermediates of replication, repair and homologous recombination reactions, including forked duplex, anti-parallel G-quadruplex and three-stranded D-loop DNA molecules. Plays a role in DNA double-strand break (DSB) repair at the DNA replication fork during DNA replication recovery from DNA damage. Recruited with TIMELESS factor upon DNA-replication stress response at DNA replication fork to preserve replication fork progression, and hence ensure DNA replication fidelity. Also cooperates with TIMELESS factor during DNA replication to regulate proper sister chromatid cohesion and mitotic chromosome segregation. Stimulates 5'-single-stranded DNA flap endonuclease activity of FEN1 in an ATP- and helicase-independent manner; and hence it may contribute in Okazaki fragment processing at DNA replication fork during lagging strand DNA synthesis. Its ability to function at DNA replication fork is modulated by its binding to long non-coding RNA (lncRNA) cohesion regulator non-coding RNA DDX11-AS1/CONCR, which is able to increase both DDX11 ATPase activity and binding to DNA replicating regions. Also plays a role in heterochromatin organization. Involved in rRNA transcription activation through binding to active hypomethylated rDNA gene loci by recruiting UBTF and the RNA polymerase Pol I transcriptional machinery. Plays a role in embryonic development and prevention of aneuploidy. Involved in melanoma cell proliferation and survival. Associates with chromatin at DNA replication fork regions. Binds to single- and double-stranded DNAs. This chain is ATP-dependent DNA helicase DDX11, found in Mus musculus (Mouse).